A 623-amino-acid polypeptide reads, in one-letter code: Phosphoenolpyruvate carboxykinase [GTP] (623 aa).

Residues Arg-86 and 220 to 222 each bind substrate; that span reads YGG. Residues Lys-229 and His-248 each coordinate Mn(2+). Ser-270 lines the substrate pocket. 271 to 276 is a binding site for GTP; the sequence is MCGKTS. Cys-272 is an active-site residue. Residue Asp-289 participates in Mn(2+) binding. A substrate-binding site is contributed by 384–386; the sequence is NAR. Residues Arg-386 and Arg-418 each contribute to the GTP site.

Belongs to the phosphoenolpyruvate carboxykinase [GTP] family. As to quaternary structure, homotetramer. Mn(2+) serves as cofactor.

It is found in the cytoplasm. It catalyses the reaction oxaloacetate + GTP = phosphoenolpyruvate + GDP + CO2. The protein operates within carbohydrate biosynthesis; gluconeogenesis. Its function is as follows. Involved in the gluconeogenesis. Catalyzes the conversion of oxaloacetate (OAA) to phosphoenolpyruvate (PEP), the rate-limiting step in the metabolic pathway that produces glucose from lactate and other precursors derived from the citric acid cycle. The sequence is that of Phosphoenolpyruvate carboxykinase [GTP] (pckG) from Thermococcus kodakarensis (strain ATCC BAA-918 / JCM 12380 / KOD1) (Pyrococcus kodakaraensis (strain KOD1)).